The primary structure comprises 194 residues: uncharacterized protein (194 aa).

The first 15 residues, 1–15, serve as a signal peptide directing secretion; sequence MFVLSIALLSCTTLC. In terms of domain architecture, PAN spans 49-134; the sequence is CPQGLHADAI…KATYYEKIRC (86 aa). 2 cysteine pairs are disulfide-bonded: Cys-49-Cys-134 and Cys-79-Cys-106.

This is an uncharacterized protein from Caenorhabditis elegans.